A 931-amino-acid polypeptide reads, in one-letter code: Semaphorin-6C (931 aa).

The first 25 residues, 1-25 (MPRAPHSMPLLLLLLLLSSLPQAQA), serve as a signal peptide directing secretion. Topologically, residues 26-605 (AFPQDPTPLL…ASASRSIPIP (580 aa)) are extracellular. The Sema domain maps to 31–517 (PTPLLTSDLQ…FPGCIVYLSL (487 aa)). Residue Asn-71 is glycosylated (N-linked (GlcNAc...) asparagine). 4 disulfides stabilise this stretch: Cys-112-Cys-122, Cys-140-Cys-149, Cys-263-Cys-374, and Cys-288-Cys-333. A glycan (N-linked (GlcNAc...) asparagine) is linked at Asn-287. Asn-438 is a glycosylation site (N-linked (GlcNAc...) asparagine). 4 disulfides stabilise this stretch: Cys-480–Cys-511, Cys-520–Cys-538, Cys-526–Cys-571, and Cys-530–Cys-546. Residues 556-591 (DVDLTGNQESTEHGDCQDGATGSQSGPGDSAYGVRR) are disordered. The helical transmembrane segment at 606-626 (LLLACVAAAFALGASVSGLLV) threads the bilayer. Residues 627–931 (SCACRRANRR…PAPHGGHFNF (305 aa)) lie on the Cytoplasmic side of the membrane. Disordered stretches follow at residues 655 to 747 (LARL…GGPA) and 777 to 931 (HGPQ…HFNF). Over residues 693–708 (PPELACLPTPETTPEL) the composition is skewed to low complexity. Residues 893–906 (PEGHRGRSLKRVDV) are compositionally biased toward basic and acidic residues. The segment covering 911–923 (SPKPPLASPPQPA) has biased composition (pro residues).

This sequence belongs to the semaphorin family.

The protein resides in the cell membrane. Its function is as follows. May be a stop signal for the dorsal root ganglion neurons in their target areas, and possibly also for other neurons. May also be involved in the maintenance and remodeling of neuronal connections. The chain is Semaphorin-6C (Sema6c) from Mus musculus (Mouse).